The primary structure comprises 939 residues: Isoleucine--tRNA ligase (939 aa).

Residues 57 to 67 carry the 'HIGH' region motif; sequence PYANGEIHIGH. Glu563 provides a ligand contact to L-isoleucyl-5'-AMP. The short motif at 604 to 608 is the 'KMSKS' region element; the sequence is KMSKS. Lys607 is an ATP binding site. Positions 902, 905, 922, and 925 each coordinate Zn(2+).

This sequence belongs to the class-I aminoacyl-tRNA synthetase family. IleS type 1 subfamily. In terms of assembly, monomer. The cofactor is Zn(2+).

The protein localises to the cytoplasm. The enzyme catalyses tRNA(Ile) + L-isoleucine + ATP = L-isoleucyl-tRNA(Ile) + AMP + diphosphate. Catalyzes the attachment of isoleucine to tRNA(Ile). As IleRS can inadvertently accommodate and process structurally similar amino acids such as valine, to avoid such errors it has two additional distinct tRNA(Ile)-dependent editing activities. One activity is designated as 'pretransfer' editing and involves the hydrolysis of activated Val-AMP. The other activity is designated 'posttransfer' editing and involves deacylation of mischarged Val-tRNA(Ile). This chain is Isoleucine--tRNA ligase, found in Methylococcus capsulatus (strain ATCC 33009 / NCIMB 11132 / Bath).